The chain runs to 993 residues: Ephrin type-A receptor 7 (993 aa).

The first 27 residues, 1 to 27 (MVLRSRLPPWIMLCSVWLLRFAHTGEA), serve as a signal peptide directing secretion. The Extracellular segment spans residues 28–550 (QAAKEVILLD…TAVSSEQNPV (523 aa)). The Eph LBD domain maps to 32 to 210 (EVILLDSKAQ…YYKKCWSIIE (179 aa)). Fibronectin type-III domains lie at 331–441 (PPSA…TGQA) and 442–537 (APSQ…TLEE). Asn-343 and Asn-410 each carry an N-linked (GlcNAc...) asparagine glycan. The helical transmembrane segment at 551–571 (IIIAVVAVAGTIILVFMVFGF) threads the bilayer. The Cytoplasmic portion of the chain corresponds to 572-993 (IIGRRHCGYS…LHLHGTGIQV (422 aa)). Tyr-603 and Tyr-609 each carry phosphotyrosine; by autocatalysis. The 262-residue stretch at 628–889 (IKIERVIGAG…QIVGILDKMI (262 aa)) folds into the Protein kinase domain. ATP contacts are provided by residues 634 to 642 (IGAGEFGEV) and Lys-660. The active-site Proton acceptor is the Asp-753. Residues Tyr-786 and Tyr-935 each carry the phosphotyrosine; by autocatalysis modification. Residues 918 to 982 (TTFCSVGEWL…MSSIQTMRAQ (65 aa)) enclose the SAM domain. The PDZ-binding motif lies at 991–993 (IQV).

This sequence belongs to the protein kinase superfamily. Tyr protein kinase family. Ephrin receptor subfamily. Heterotetramer upon binding of the ligand. The heterotetramer is composed of an ephrin dimer and a receptor dimer. Oligomerization is probably required to induce biological responses. Phosphorylated.

It is found in the cell membrane. It catalyses the reaction L-tyrosyl-[protein] + ATP = O-phospho-L-tyrosyl-[protein] + ADP + H(+). In terms of biological role, receptor tyrosine kinase which binds promiscuously GPI-anchored ephrin-A family ligands residing on adjacent cells, leading to contact-dependent bidirectional signaling into neighboring cells. The signaling pathway downstream of the receptor is referred to as forward signaling while the signaling pathway downstream of the ephrin ligand is referred to as reverse signaling. Among GPI-anchored ephrin-A ligands, EFNA5 is a cognate/functional ligand for EPHA7 and their interaction regulates brain development modulating cell-cell adhesion and repulsion. Has a repellent activity on axons and is for instance involved in the guidance of corticothalamic axons and in the proper topographic mapping of retinal axons to the colliculus. May also regulate brain development through a caspase(CASP3)-dependent proapoptotic activity. Forward signaling may result in activation of components of the ERK signaling pathway including MAP2K1, MAP2K2, MAPK1 and MAPK3 which are phosphorylated upon activation of EPHA7. This chain is Ephrin type-A receptor 7 (EPHA7), found in Gallus gallus (Chicken).